The sequence spans 23 residues: M-myrmeciitoxin-Mp2b (23 aa).

Q23 bears the Glutamine amide mark.

The protein belongs to the formicidae venom precursor-01 superfamily. Ant pilosulin family. In terms of assembly, heterodimer with M-MIITX-Mp2a (pilosulin-3a) (AC Q26464); disulfide-linked. Only heterodimers (and not monomers) have been identified in the venom. As to expression, expressed by the venom gland.

It localises to the secreted. Functionally, heterodimer protein that may serve both defensive (pain-inducing) and predatory (insecticidal) roles. Has membrane-disrupting activity and shows induction of non-specific calcium influx into cells,. Shows broad-spectrum activity against a diverse range of bacteria, and cell lines, as well as hemolytic activity (EC(50)=2.18 uM). In vivo, shows moderate insecticidal activity against D.melanogaster and potent anthelmintic activity against the veterinary nematode H.contortus. In addition, intraplantar injection into mice induces nocifensive behavior and mechanical allodynia. This chain is M-myrmeciitoxin-Mp2b, found in Myrmecia pilosula (Jack jumper ant).